The chain runs to 382 residues: 4-hydroxybutyrate dehydrogenase (382 aa).

Residues aspartate 37, asparagine 67, 94 to 98, 138 to 142, and lysine 159 each bind NAD(+); these read GSSID and TTSGT. Fe cation contacts are provided by aspartate 193, histidine 197, histidine 261, and histidine 280. Residue histidine 280 coordinates NAD(+).

Belongs to the iron-containing alcohol dehydrogenase family. It depends on Fe cation as a cofactor.

The catalysed reaction is 4-hydroxybutanoate + NAD(+) = succinate semialdehyde + NADH + H(+). Its activity is regulated as follows. Shows competitive inhibition of GHBDH activity by the product succinic semialdehyde, and non-competitive inhibitions by the three other substrate-product combinations. The conversion of GHB to SSA is activated by two different saturating purified nudix hydrolases, B.methanolicus activator ACT and E.coli NudF. The nudix hydrolases do not activate the reverse reaction. Its function is as follows. Involved in the degradation of 4-hydroxybutyrate. Catalyzes the interconversion of gamma-hydroxybutyrate (GHB) and succinic semialdehyde (SSA). The polypeptide is 4-hydroxybutyrate dehydrogenase (Cupriavidus necator (Alcaligenes eutrophus)).